The following is a 250-amino-acid chain: DNA repair protein RecO (250 aa).

The protein belongs to the RecO family.

Involved in DNA repair and RecF pathway recombination. The chain is DNA repair protein RecO from Beijerinckia indica subsp. indica (strain ATCC 9039 / DSM 1715 / NCIMB 8712).